A 543-amino-acid chain; its full sequence is RuBisCO large subunit-binding protein subunit alpha, chloroplastic (543 aa).

A chloroplast-targeting transit peptide spans glycine 1–alanine 2.

The protein belongs to the chaperonin (HSP60) family. As to quaternary structure, oligomer of probably six alpha and six beta subunits.

The protein resides in the plastid. Its subcellular location is the chloroplast. This protein binds RuBisCO small and large subunits and is implicated in the assembly of the enzyme oligomer. The chain is RuBisCO large subunit-binding protein subunit alpha, chloroplastic from Triticum aestivum (Wheat).